A 399-amino-acid polypeptide reads, in one-letter code: MEKHLIALSVAALLAGAAPASADIKMGSLYPFSGPLALLGDESARGLEIAVEEINAKGGVQGEKIVLVRGDAVDNNQAIGEARRLISVENVAGIFGSFSSGRAVAASQVSELAGLPYFELGAVADEITDRGLENVYRANPYARDFAQMIVEMLQKKIAPKLGRDSKDLKIAVIYEDSSYGTSVAKHEETFLKEAGLNMVLSQSYPGNTVDMSSLVLDLKSAGADVVLQTSYQSDSVLFLQQANEGGYKPSAIVGAGGGYSLQPTADAVGHDVIEAAYDVDFTQFAVNTSFTPGLEEFVEAYKKKYGETPRSGHSLTNYVGAKVILEALNKVKGFDAAAVKQALSAVDIEAGKNAMGYGFKFDQNNQNERASMMGMQWQDGKLVTVYPDAAAISEIRLPQ.

An N-terminal signal peptide occupies residues 1–22 (MEKHLIALSVAALLAGAAPASA).

The protein belongs to the leucine-binding protein family.

In terms of biological role, component of an amino-acid transport system. The polypeptide is Leu/Ile/Val-binding protein homolog 7 (Brucella melitensis biotype 1 (strain ATCC 23456 / CCUG 17765 / NCTC 10094 / 16M)).